The sequence spans 481 residues: UDP-glycosyltransferase 85A2 (481 aa).

Residues Ser303, 360–362, 377–385, and 399–402 contribute to the UDP-alpha-D-glucose site; these read CPQ, HCGWNSTLE, and FAEQ.

It belongs to the UDP-glycosyltransferase family. As to expression, expressed in roots, shoots, leaves and flowers.

In Arabidopsis thaliana (Mouse-ear cress), this protein is UDP-glycosyltransferase 85A2 (UGT85A2).